We begin with the raw amino-acid sequence, 350 residues long: Nicotinate-nucleotide--dimethylbenzimidazole phosphoribosyltransferase (350 aa).

E317 serves as the catalytic Proton acceptor.

Belongs to the CobT family.

It catalyses the reaction 5,6-dimethylbenzimidazole + nicotinate beta-D-ribonucleotide = alpha-ribazole 5'-phosphate + nicotinate + H(+). Its pathway is nucleoside biosynthesis; alpha-ribazole biosynthesis; alpha-ribazole from 5,6-dimethylbenzimidazole: step 1/2. Functionally, catalyzes the synthesis of alpha-ribazole-5'-phosphate from nicotinate mononucleotide (NAMN) and 5,6-dimethylbenzimidazole (DMB). This is Nicotinate-nucleotide--dimethylbenzimidazole phosphoribosyltransferase from Shewanella putrefaciens (strain CN-32 / ATCC BAA-453).